The sequence spans 290 residues: NAD kinase (290 aa).

The active-site Proton acceptor is D72. NAD(+) contacts are provided by residues 72–73 (DG), K77, 145–146 (NE), D175, 186–191 (TAYSLS), and A210.

This sequence belongs to the NAD kinase family. A divalent metal cation is required as a cofactor.

The protein resides in the cytoplasm. The catalysed reaction is NAD(+) + ATP = ADP + NADP(+) + H(+). In terms of biological role, involved in the regulation of the intracellular balance of NAD and NADP, and is a key enzyme in the biosynthesis of NADP. Catalyzes specifically the phosphorylation on 2'-hydroxyl of the adenosine moiety of NAD to yield NADP. The sequence is that of NAD kinase from Bacteroides fragilis (strain ATCC 25285 / DSM 2151 / CCUG 4856 / JCM 11019 / LMG 10263 / NCTC 9343 / Onslow / VPI 2553 / EN-2).